The following is a 45-amino-acid chain: Large ribosomal subunit protein bL34 (45 aa).

Residues 1–27 are disordered; that stretch reads MTKRTLGGTSRKRKRVSGFRVRMRSHT. Basic residues predominate over residues 10-27; that stretch reads SRKRKRVSGFRVRMRSHT.

Belongs to the bacterial ribosomal protein bL34 family.

In Synechococcus sp. (strain CC9902), this protein is Large ribosomal subunit protein bL34.